Here is a 105-residue protein sequence, read N- to C-terminus: UPF0148 protein PH0795 (105 aa).

It belongs to the UPF0148 family.

This is UPF0148 protein PH0795 from Pyrococcus horikoshii (strain ATCC 700860 / DSM 12428 / JCM 9974 / NBRC 100139 / OT-3).